The chain runs to 213 residues: uncharacterized protein (213 aa).

This is an uncharacterized protein from Acanthamoeba polyphaga (Amoeba).